The primary structure comprises 187 residues: Acireductone dioxygenase (187 aa).

Fe(2+)-binding residues include H90, H92, E96, and H135. Positions 90, 92, 96, and 135 each coordinate Ni(2+).

Belongs to the acireductone dioxygenase (ARD) family. The cofactor is Fe(2+). It depends on Ni(2+) as a cofactor.

It localises to the cytoplasm. Its subcellular location is the nucleus. It carries out the reaction 1,2-dihydroxy-5-(methylsulfanyl)pent-1-en-3-one + O2 = 4-methylsulfanyl-2-oxobutanoate + formate + 2 H(+). The enzyme catalyses 1,2-dihydroxy-5-(methylsulfanyl)pent-1-en-3-one + O2 = 3-(methylsulfanyl)propanoate + CO + formate + 2 H(+). It participates in amino-acid biosynthesis; L-methionine biosynthesis via salvage pathway; L-methionine from S-methyl-5-thio-alpha-D-ribose 1-phosphate: step 5/6. In terms of biological role, catalyzes 2 different reactions between oxygen and the acireductone 1,2-dihydroxy-3-keto-5-methylthiopentene (DHK-MTPene) depending upon the metal bound in the active site. Fe-containing acireductone dioxygenase (Fe-ARD) produces formate and 2-keto-4-methylthiobutyrate (KMTB), the alpha-ketoacid precursor of methionine in the methionine recycle pathway. Ni-containing acireductone dioxygenase (Ni-ARD) produces methylthiopropionate, carbon monoxide and formate, and does not lie on the methionine recycle pathway. The chain is Acireductone dioxygenase from Drosophila pseudoobscura pseudoobscura (Fruit fly).